The following is a 1390-amino-acid chain: MVVLRSSLELHNHSAASATGSLDLSSDFLSLEHIGRRRLRSAGAAQKKPAATTAKAGDGSSVKEVETYHRTRALRSLRKDAQNSSDSSFEKNVEITEQLANGRHFTRQLARQQADKKKEEHREDKVIPVTRSLRARNIVQSTEHLHEDNGDVEVRRSCRIRSRYSGVNQSMLFDKLITNTAEAVLQKMDDMKKMRRQRMRELEDLGVFNETEESNLNMYTRGKQKDIQRTDEETTDNQEGSVESSEEGEDQEHEDDGEDEDDEDDDDDDDDDDDDDDEDDEDEEDGEEENQKRYYLRQRKATVYYQAPLEKPRHQRKPNIFYSGPASPARPRYRLSSAGPRSPYCKRMNRRRHAIHSSDSTSSSSSEDEQHFERRRKRSRNRAINRCLPLNFRKDELKGIYKDRMKIGASLADVDPMQLDSSVRFDSVGGLSNHIAALKEMVVFPLLYPEVFEKFKIQPPRGCLFYGPPGTGKTLVARALANECSQGDKRVAFFMRKGADCLSKWVGESERQLRLLFDQAYQMRPSIIFFDEIDGLAPVRSSRQDQIHSSIVSTLLALMDGLDSRGEIVVIGATNRLDSIDPALRRPGRFDREFLFSLPDKEARKEILKIHTRDWNPKPLDTFLEELAENCVGYCGADIKSICAEAALCALRRRYPQIYTTSEKLQLDLSSINISAKDFEVAMQKMIPASQRAVTSPGQALSTVVKPLLQNTVDKILEALQRVFPHAEFRTNKTLDSDISCPLLESDLAYSDDDVPSVYENGLSQKSSHKAKDNFNFLHLNRNACYQPMSFRPRILIVGEPGFGQGSHLAPAVIHALEKFTVYTLDIPVLFGVSTTSPEETCAQVIREAKRTAPSIVYVPHIHVWWEIVGPTLKATFTTLLQNIPSFAPVLLLATSDKPHSALPEEVQELFIRDYGEIFNVQLPDKEERTKFFEDLILKQAAKPPISKKKAVLQALEVLPVAPPPEPRSLTAEEVKRLEEQEEDTFRELRIFLRNVTHRLAIDKRFRVFTKPVDPDEVPDYVTVIKQPMDLSSVISKIDLHKYLTVKDYLRDIDLICSNALEYNPDRDPGDRLIRHRACALRDTAYAIIKEELDEDFEQLCEEIQESRKKRGCSSSKYAPSYYHVMPKQNSTLVGDKRSDPEQNEKLKTPSTPVACSTPAQLKRKIRKKSNWYLGTIKKRRKISQAKDDSQNAIDHKIESDTEETQDTSVDHNETGNTGESSVEENEKQQNASESKLELRNNSNTCNIENELEDSRKTTACTELRDKIACNGDASSSQIIHISDENEGKEMCVLRMTRARRSQVEQQQLITVEKALAILSQPTPSLVVDHERLKNLLKTVVKKSQNYNIFQLENLYAVISQCIYRHRKDHDKTSLIQKMEQEVENFSCSR.

The tract at residues 40-63 is disordered; it reads RSAGAAQKKPAATTAKAGDGSSVK. Residues 42–57 show a composition bias toward low complexity; sequence AGAAQKKPAATTAKAG. Residues serine 60 and serine 61 each carry the phosphoserine modification. Lysine 125 participates in a covalent cross-link: Glycyl lysine isopeptide (Lys-Gly) (interchain with G-Cter in SUMO2). Phosphoserine is present on residues serine 165 and serine 170. Residues 216-380 form a disordered region; the sequence is LNMYTRGKQK…HFERRRKRSR (165 aa). Basic and acidic residues predominate over residues 223–232; the sequence is KQKDIQRTDE. Residues 244-288 are compositionally biased toward acidic residues; the sequence is SSEEGEDQEHEDDGEDEDDEDDDDDDDDDDDDDDEDDEDEEDGEE. Lysine 317 is covalently cross-linked (Glycyl lysine isopeptide (Lys-Gly) (interchain with G-Cter in SUMO2)). 4 positions are modified to phosphoserine: serine 327, serine 337, serine 342, and serine 410. 467 to 474 lines the ATP pocket; that stretch reads GPPGTGKT. 2 positions are modified to phosphoserine: serine 746 and serine 751. 2 coiled-coil regions span residues 970–994 and 1086–1112; these read LTAE…IFLR and YAII…KKRG. The Bromo domain occupies 980-1092; that stretch reads EQEEDTFREL…DTAYAIIKEE (113 aa). Positions 1124-1163 are disordered; sequence HVMPKQNSTLVGDKRSDPEQNEKLKTPSTPVACSTPAQLK. Lysine 1128 is covalently cross-linked (Glycyl lysine isopeptide (Lys-Gly) (interchain with G-Cter in SUMO2)). Positions 1135 to 1148 are enriched in basic and acidic residues; it reads GDKRSDPEQNEKLK. A Phosphoserine modification is found at serine 1139. A Glycyl lysine isopeptide (Lys-Gly) (interchain with G-Cter in SUMO2) cross-link involves residue lysine 1148. A phosphothreonine mark is found at threonine 1149, threonine 1152, and threonine 1176. The segment covering 1149–1160 has biased composition (polar residues); sequence TPSTPVACSTPA. The interval 1181 to 1242 is disordered; it reads RKISQAKDDS…SESKLELRNN (62 aa). Residues 1185–1200 are compositionally biased toward basic and acidic residues; the sequence is QAKDDSQNAIDHKIES. Phosphoserine is present on residues serine 1200, serine 1233, and serine 1235. The span at 1229–1242 shows a compositional bias: polar residues; that stretch reads QQNASESKLELRNN. Residue lysine 1236 forms a Glycyl lysine isopeptide (Lys-Gly) (interchain with G-Cter in SUMO2) linkage. Phosphoserine occurs at positions 1243 and 1302. Threonine 1323 bears the Phosphothreonine mark.

The protein belongs to the AAA ATPase family. In terms of assembly, interacts with ESR1 and NCOA3 and these interactions are enhanced by estradiol. Interacts with acetylated lysine residues on histone H1.4, H2A, H2B and H3 (in vitro). Highly expressed in estrogen receptor positive breast tumors and in osteosarcoma tumors.

Its subcellular location is the nucleus. It carries out the reaction ATP + H2O = ADP + phosphate + H(+). Functionally, may be a transcriptional coactivator of the nuclear receptor ESR1 required to induce the expression of a subset of estradiol target genes, such as CCND1, MYC and E2F1. May play a role in the recruitment or occupancy of CREBBP at some ESR1 target gene promoters. May be required for histone hyperacetylation. Involved in the estrogen-induced cell proliferation and cell cycle progression of breast cancer cells. This is ATPase family AAA domain-containing protein 2 (ATAD2) from Homo sapiens (Human).